The chain runs to 533 residues: 1-aminocyclopropane-1-carboxylate synthase 5 (533 aa).

Position 358 is an N6-(pyridoxal phosphate)lysine (lysine 358).

The protein belongs to the class-I pyridoxal-phosphate-dependent aminotransferase family. It depends on pyridoxal 5'-phosphate as a cofactor. Expressed in shoots and leaf blades. Expressed at low levels in leaf sheaths. Expressed in vasculature of roots and shoots.

It catalyses the reaction S-adenosyl-L-methionine = 1-aminocyclopropane-1-carboxylate + S-methyl-5'-thioadenosine + H(+). It functions in the pathway alkene biosynthesis; ethylene biosynthesis via S-adenosyl-L-methionine; ethylene from S-adenosyl-L-methionine: step 1/2. Catalyzes the formation of 1-aminocyclopropane-1-carboxylate, a direct precursor of ethylene in higher plants. The sequence is that of 1-aminocyclopropane-1-carboxylate synthase 5 from Oryza sativa subsp. japonica (Rice).